Reading from the N-terminus, the 254-residue chain is 5'/3'-nucleotidase SurE (254 aa).

The a divalent metal cation site is built by D9, D10, S40, and N93.

The protein belongs to the SurE nucleotidase family. A divalent metal cation is required as a cofactor.

It localises to the cytoplasm. The catalysed reaction is a ribonucleoside 5'-phosphate + H2O = a ribonucleoside + phosphate. The enzyme catalyses a ribonucleoside 3'-phosphate + H2O = a ribonucleoside + phosphate. It catalyses the reaction [phosphate](n) + H2O = [phosphate](n-1) + phosphate + H(+). Its function is as follows. Nucleotidase with a broad substrate specificity as it can dephosphorylate various ribo- and deoxyribonucleoside 5'-monophosphates and ribonucleoside 3'-monophosphates with highest affinity to 3'-AMP. Also hydrolyzes polyphosphate (exopolyphosphatase activity) with the preference for short-chain-length substrates (P20-25). Might be involved in the regulation of dNTP and NTP pools, and in the turnover of 3'-mononucleotides produced by numerous intracellular RNases (T1, T2, and F) during the degradation of various RNAs. The chain is 5'/3'-nucleotidase SurE from Photorhabdus laumondii subsp. laumondii (strain DSM 15139 / CIP 105565 / TT01) (Photorhabdus luminescens subsp. laumondii).